We begin with the raw amino-acid sequence, 601 residues long: Mitochondrial tRNA methylthiotransferase CDK5RAP1 (601 aa).

The N-terminal 33 residues, 1–33 (MHPLQCVLQVQRSLGWGPLASVSWLSLRMCRAH), are a transit peptide targeting the mitochondrion. An MTTase N-terminal domain is found at 100–220 (RKVYLETYGC…LPRLLAVAES (121 aa)). Residues Cys109, Cys145, Cys183, Cys258, Cys262, and Cys265 each contribute to the [4Fe-4S] cluster site. One can recognise a Radical SAM core domain in the interval 244–512 (SASATSAFVS…ITIFREEATK (269 aa)). One can recognise a TRAM domain in the interval 515–590 (QTSVGCTQLV…SQTLRGHVLC (76 aa)).

Belongs to the methylthiotransferase family. MiaB subfamily. As to quaternary structure, interacts with CDK5R1 (p35 form). CDK5RAP1, CDK5RAP2 and CDK5RAP3 show competitive binding to CDK5R1. Forms a complex with CDK5R1 and CDK5. The cofactor is [4Fe-4S] cluster. As to expression, expressed in heart, brain, placenta, lung, liver, skeletal muscle, kidney and pancreas. Expressed in neurons of central nervous tissue. In terms of tissue distribution, mainly expressed in brain, placenta and testis. High expression in placenta and lung.

Its subcellular location is the mitochondrion. The enzyme catalyses N(6)-dimethylallyladenosine(37) in tRNA + (sulfur carrier)-SH + AH2 + 2 S-adenosyl-L-methionine = 2-methylsulfanyl-N(6)-dimethylallyladenosine(37) in tRNA + (sulfur carrier)-H + 5'-deoxyadenosine + L-methionine + A + S-adenosyl-L-homocysteine + 2 H(+). Methylthiotransferase that catalyzes the conversion of N6-(dimethylallyl)adenosine (i(6)A) to 2-methylthio-N6-(dimethylallyl)adenosine (ms(2)i(6)A) at position 37 (adjacent to the 3'-end of the anticodon) of four mitochondrial DNA-encoded tRNAs (Ser(UCN), Phe, Tyr and Trp). Essential for efficient and highly accurate protein translation by the ribosome. Specifically inhibits CDK5 activation by CDK5R1. Essential for efficient mitochondrial protein synthesis and respiratory chain; shows pathological consequences in mitochondrial disease. This is Mitochondrial tRNA methylthiotransferase CDK5RAP1 from Homo sapiens (Human).